The chain runs to 892 residues: Protein BNI4 (892 aa).

2 positions are modified to phosphoserine: serine 43 and serine 133. Disordered stretches follow at residues 185–287 and 305–387; these read DFLS…EDTS and KPVI…QDTE. Residues 208–223 show a composition bias toward basic and acidic residues; it reads TILERDNNLPVKREEN. Composition is skewed to polar residues over residues 224–236 and 270–280; these read TIIN…TTHS and DSSAQRTTSAG. Position 281 is a phosphoserine (serine 281). Residues 309-335 show a composition bias toward polar residues; it reads GNNSVTNEKNKMSSSSTFSMNIQTSLK. Low complexity predominate over residues 346–356; it reads SSSSIFNSFLK. Residues 357–371 are compositionally biased toward basic and acidic residues; sequence GKIETSDSPRKEPMR. Phosphoserine occurs at positions 364 and 394. Phosphothreonine is present on threonine 410. Serine 476, serine 500, and serine 503 each carry phosphoserine. Disordered regions lie at residues 506-526, 618-644, and 685-734; these read RTRS…RSLT, SDEE…SERQ, and YATE…GDER. Serine 618 carries the phosphoserine modification. The span at 624–643 shows a compositional bias: basic and acidic residues; sequence EVERDVPKPREEPLKKDSER. The residue at position 703 (threonine 703) is a Phosphothreonine. Over residues 707–719 the composition is skewed to basic and acidic residues; sequence RNNKEDSYKERET. Serine 746 and serine 825 each carry phosphoserine.

In terms of assembly, may interact with CHS3 and seems to be an adapter (along with SKT5) to link CHS3 to septins.

The chain is Protein BNI4 (BNI4) from Saccharomyces cerevisiae (strain ATCC 204508 / S288c) (Baker's yeast).